Here is a 130-residue protein sequence, read N- to C-terminus: uncharacterized protein (130 aa).

2 disordered regions span residues 1–47 (MTFY…QSNT) and 78–130 (QTLE…SESS). Over residues 13–33 (QWKQLQTQQNKKNSPRPVTSS) the composition is skewed to polar residues. Positions 86–110 (PSKHKRKRTKYRRTKKSKHHSRKKT) are enriched in basic residues. A compositionally biased stretch (basic and acidic residues) spans 117 to 130 (SERDSTTGRESESS).

This is an uncharacterized protein from Torque teno mini virus 1 (isolate TLMV-CBD279).